A 323-amino-acid polypeptide reads, in one-letter code: Muscleblind-like protein 3 (323 aa).

C3H1-type zinc fingers lie at residues 13-41 (WLTL…HPSR), 47-73 (NGRV…HPPP), 177-205 (TDKL…HPLE), and 213-239 (ENSV…HPPA).

The protein belongs to the muscleblind family. In terms of tissue distribution, expressed in fast and slow myotomal muscle, heart, liver, skin, brain and testis.

The protein resides in the nucleus. It localises to the cytoplasm. Involved in pre-mRNA alternative splicing regulation. Could inhibit terminal muscle differentiation, acting at approximately the time of myogenin induction. The sequence is that of Muscleblind-like protein 3 (mbnl3) from Takifugu rubripes (Japanese pufferfish).